A 197-amino-acid chain; its full sequence is Protein SPMIP2 (197 aa).

Residues 161–197 form a disordered region; sequence SKAALPIGSRPPKLPKLPKKEEKSKFRPLHQHDARCY. The span at 178 to 197 shows a compositional bias: basic and acidic residues; it reads PKKEEKSKFRPLHQHDARCY.

This is Protein SPMIP2 (SPMIP2) from Bos taurus (Bovine).